Consider the following 193-residue polypeptide: Pyridoxal 5'-phosphate synthase subunit PdxT (193 aa).

Position 50–52 (50–52 (GES)) interacts with L-glutamine. Cys-82 functions as the Nucleophile in the catalytic mechanism. Residues Arg-109 and 136–137 (IR) each bind L-glutamine. Residues His-172 and Glu-174 each act as charge relay system in the active site.

This sequence belongs to the glutaminase PdxT/SNO family. As to quaternary structure, in the presence of PdxS, forms a dodecamer of heterodimers. Only shows activity in the heterodimer.

It carries out the reaction aldehydo-D-ribose 5-phosphate + D-glyceraldehyde 3-phosphate + L-glutamine = pyridoxal 5'-phosphate + L-glutamate + phosphate + 3 H2O + H(+). It catalyses the reaction L-glutamine + H2O = L-glutamate + NH4(+). It functions in the pathway cofactor biosynthesis; pyridoxal 5'-phosphate biosynthesis. Catalyzes the hydrolysis of glutamine to glutamate and ammonia as part of the biosynthesis of pyridoxal 5'-phosphate. The resulting ammonia molecule is channeled to the active site of PdxS. In Streptococcus pneumoniae serotype 19F (strain G54), this protein is Pyridoxal 5'-phosphate synthase subunit PdxT.